The following is a 564-amino-acid chain: MTISPETLAKSILDGFHSHYRRFQVLTQGARERFLKRDWTAVVSAASERIHYYDHQVGTTAKKVERRVGTELDEGLWLATRQRYQQLLKFHPQAELAETFYNSVFCRVFDRAYFNNDYIFVETVLANHIPVPVENECHSYFPVVDGLEGTLTRVFEDIGLGGEFENFENDIEQLRDKFFERATETDIEAHNLRIDVLKSPFYRNKAAYIVGRVVTENNHYPFIVPVLINSQGKLYVDAFITRSDRMATIFGFARSYFMVETEAPSALVRFLKDLMPHKTLAELYSSVGFHKQGKTEFYREFLHHLRRTDDQLSAAPGVKGMVMTVFTLPSFPYVFKVIKDRLGGTKEFGRQTVIDRYRMVKRHDRVGRMADTLEFVDVALPLKRISADLLDEFKQTIANSISIEGDTLVIHQLFVERRMTPLNLYLEYANDEEVDAAMDDYGRALKEMMAANIFPGDMLLKNFGVTRHKRVVFYDYDEVRYLTDMSFRRLPENDWEVSYAPDDVFPQQLAQFAVPQAKYRNKLLKRHPELIDSAYWCRVQKNIRKGELTDVFPYDADLRFTRRF.

Residues 315–321 and Lys-336 contribute to the ATP site; that span reads APGVKGM. Asp-371 is an active-site residue.

Belongs to the AceK family.

It localises to the cytoplasm. The catalysed reaction is L-seryl-[isocitrate dehydrogenase] + ATP = O-phospho-L-seryl-[isocitrate dehydrogenase] + ADP + H(+). Its function is as follows. Bifunctional enzyme which can phosphorylate or dephosphorylate isocitrate dehydrogenase (IDH) on a specific serine residue. This is a regulatory mechanism which enables bacteria to bypass the Krebs cycle via the glyoxylate shunt in response to the source of carbon. When bacteria are grown on glucose, IDH is fully active and unphosphorylated, but when grown on acetate or ethanol, the activity of IDH declines drastically concomitant with its phosphorylation. This Idiomarina loihiensis (strain ATCC BAA-735 / DSM 15497 / L2-TR) protein is Isocitrate dehydrogenase kinase/phosphatase.